Reading from the N-terminus, the 319-residue chain is ATP-dependent 6-phosphofructokinase (319 aa).

Gly11 provides a ligand contact to ATP. Position 21–25 (21–25 (RAVVR)) interacts with ADP. Residues 72–73 (RC) and 102–105 (GDGS) contribute to the ATP site. Position 103 (Asp103) interacts with Mg(2+). 125 to 127 (TID) lines the substrate pocket. Residue Asp127 is the Proton acceptor of the active site. ADP is bound at residue Arg154. Substrate-binding positions include Arg162 and 169–171 (MGR). ADP is bound by residues 185-187 (GAE), Arg211, and 213-215 (KKH). Substrate contacts are provided by residues Glu222, Arg243, and 249–252 (HVQR).

It belongs to the phosphofructokinase type A (PFKA) family. ATP-dependent PFK group I subfamily. Prokaryotic clade 'B1' sub-subfamily. In terms of assembly, homotetramer. Mg(2+) serves as cofactor.

Its subcellular location is the cytoplasm. It catalyses the reaction beta-D-fructose 6-phosphate + ATP = beta-D-fructose 1,6-bisphosphate + ADP + H(+). It participates in carbohydrate degradation; glycolysis; D-glyceraldehyde 3-phosphate and glycerone phosphate from D-glucose: step 3/4. Its activity is regulated as follows. Allosterically activated by ADP and other diphosphonucleosides, and allosterically inhibited by phosphoenolpyruvate. In terms of biological role, catalyzes the phosphorylation of D-fructose 6-phosphate to fructose 1,6-bisphosphate by ATP, the first committing step of glycolysis. The chain is ATP-dependent 6-phosphofructokinase from Bacillus anthracis (strain A0248).